Consider the following 375-residue polypeptide: Metal tolerance protein B (375 aa).

Over 1 to 57 (MELEQICILKPDDEEEMESPSPSKTEENLGVVPLSCAFTRQEHCVSETKEREESTRR) the chain is Cytoplasmic. Residues 58–78 (LSSLIFLYLIVMSVQIVGGFK) form a helical membrane-spanning segment. The Vacuolar segment spans residues 79 to 84 (ANSLAV). A helical transmembrane segment spans residues 85 to 105 (MTDAAHLLSDVAGLCVSLLAI). The Cytoplasmic portion of the chain corresponds to 106 to 122 (KVSSWEANPRNSFGFKR). A helical transmembrane segment spans residues 123 to 143 (LEVLAAFLSVQLIWLVSGVII). At 144-160 (HEAIQRLLSRSREVNGE) the chain is on the vacuolar side. The helical transmembrane segment at 161–181 (IMFGISAFGFFMNLVMVLWLG) threads the bilayer. The required for zinc-binding stretch occupies residues 182–206 (HNHSHHHHDHHHHHHNHKHQHQHHH). The Cytoplasmic segment spans residues 182–240 (HNHSHHHHDHHHHHHNHKHQHQHHHKEVVAEEEEEEMNPLKGEKSSSKEMNINIQGAYL). A helical transmembrane segment spans residues 241–261 (HAMADMIQSLGVMIGGGIIWV). Over 262 to 264 (KPK) the chain is Vacuolar. The helical transmembrane segment at 265-285 (WVLVDLICTLVFSAFALAATL) threads the bilayer. Residues 286 to 375 (PILKNIFGIL…YHATVQVESE (90 aa)) lie on the Cytoplasmic side of the membrane.

The protein belongs to the cation diffusion facilitator (CDF) transporter (TC 2.A.4) family. SLC30A subfamily.

The protein resides in the vacuole membrane. Functionally, involved in sequestration of excess zinc in the cytoplasm into vacuoles to maintain zinc homeostasis. The protein is Metal tolerance protein B (MTPB) of Arabidopsis thaliana (Mouse-ear cress).